The following is a 443-amino-acid chain: DNA double-strand break repair protein Mre11 (443 aa).

Mn(2+) contacts are provided by D8, H10, D49, and N84. H85 (proton donor) is an active-site residue. H169, H201, and H203 together coordinate Mn(2+). Residues 382-429 (QEEGAEERVVEEETEKKVEEQFKGDEEADEAERRAEETEKAKSTKKAR) are disordered. A compositionally biased stretch (basic and acidic residues) spans 395–423 (TEKKVEEQFKGDEEADEAERRAEETEKAK).

Belongs to the MRE11/RAD32 family. As to quaternary structure, homodimer. Forms a heterotetramer composed of two Mre11 subunits and two Rad50 subunits. The cofactor is Mn(2+).

With respect to regulation, nuclease activity is regulated by Rad50. Part of the Rad50/Mre11 complex, which is involved in the early steps of DNA double-strand break (DSB) repair. The complex may facilitate opening of the processed DNA ends to aid in the recruitment of HerA and NurA. Mre11 binds to DSB ends and has both double-stranded 3'-5' exonuclease activity and single-stranded endonuclease activity. The polypeptide is DNA double-strand break repair protein Mre11 (Archaeoglobus fulgidus (strain ATCC 49558 / DSM 4304 / JCM 9628 / NBRC 100126 / VC-16)).